The following is a 320-amino-acid chain: GDP-L-fucose synthase (320 aa).

14-20 (GGSGLVG) contacts NADP(+). Y142 functions as the Proton donor/acceptor in the catalytic mechanism. NADP(+)-binding positions include K146, 169-172 (PTNI), and H185. Substrate contacts are provided by K193, R214, and D276.

It belongs to the NAD(P)-dependent epimerase/dehydratase family. Fucose synthase subfamily.

The enzyme catalyses GDP-beta-L-fucose + NADP(+) = GDP-4-dehydro-alpha-D-rhamnose + NADPH + H(+). It participates in nucleotide-sugar biosynthesis; GDP-L-fucose biosynthesis via de novo pathway; GDP-L-fucose from GDP-alpha-D-mannose: step 2/2. Its function is as follows. Catalyzes the two-step NADP-dependent conversion of GDP-4-dehydro-6-deoxy-D-mannose to GDP-fucose, involving an epimerase and a reductase reaction. This Dictyostelium discoideum (Social amoeba) protein is GDP-L-fucose synthase (ger).